Reading from the N-terminus, the 309-residue chain is MRKIIVGSRKSKLALTQTNWFIDQLKALGLPYEFEVKEIVTKGDVILDVTLSKVGGKGLFVKEIEHALLTKEIDMAVHSMKDMPAVLPEGLMIGCTPKRVDPRDAFISKNGASFKELAEGAILGTSSLRRSAQLLAARPDLQVKWIRGNIDTRLRKLKEEDYDAIILATAGLQRMGWDDEVITEHLDETLCVPAVGQGALAIECREDDKDLLQLLAHMNDAITERTVAAERVFLHKLEGGCQVPIAGYATLKENDTIELTALVGSMDGSVLLKETVVGTNPEEVGLEAAGRLIKQGAKELILAANKEQQ.

Cys241 bears the S-(dipyrrolylmethanemethyl)cysteine mark.

This sequence belongs to the HMBS family. In terms of assembly, monomer. The cofactor is dipyrromethane.

It catalyses the reaction 4 porphobilinogen + H2O = hydroxymethylbilane + 4 NH4(+). Its pathway is porphyrin-containing compound metabolism; protoporphyrin-IX biosynthesis; coproporphyrinogen-III from 5-aminolevulinate: step 2/4. Tetrapolymerization of the monopyrrole PBG into the hydroxymethylbilane pre-uroporphyrinogen in several discrete steps. The chain is Porphobilinogen deaminase from Bacillus cereus (strain G9842).